The following is a 262-amino-acid chain: MAFISSGYNPAKPMENRITDIGPRKFTEFFPPVIAKNAGNWDYHEILEPGILVHVAKNGDKVFTVRCGAARLMSTSHIREACEIAKKFCNGHLRFTTRNNIEFMVDNEETLKALVADLKTRKFAAGSFKFPIGGTGASISNIVHTQGWVYCHTPATDASGPVKAVMDELFEEFTSMRLPAIVRVSLACCINMCGAVHCSDIGLVGIHRKPPMIDHENLANLCEIPLAVAACPTAAVKPITAEVNGQKVKSVAINNDRCMYCG.

[4Fe-4S] cluster-binding residues include cysteine 151, cysteine 188, cysteine 189, cysteine 193, cysteine 231, cysteine 258, and cysteine 261. Cysteine 193 provides a ligand contact to siroheme.

In terms of assembly, heterohexamer of two alpha, two beta and two gamma subunits. The cofactor is [4Fe-4S] cluster. Requires siroheme as cofactor.

The enzyme catalyses [DsrC protein]-trisulfide + NAD(+) + 3 H2O = [DsrC protein]-dithiol + sulfite + NADH + 3 H(+). Its function is as follows. Catalyzes the reduction of sulfite to sulfide. This is the terminal oxidation reaction in sulfate respiration, a process catalyzed by the sulfate-reducing bacteria. This Megalodesulfovibrio gigas (strain ATCC 19364 / DSM 1382 / NCIMB 9332 / VKM B-1759) (Desulfovibrio gigas) protein is Sulfite reductase, dissimilatory-type subunit beta (dsrB).